The chain runs to 211 residues: Prolactin (211 aa).

The first 24 residues, 1 to 24, serve as a signal peptide directing secretion; it reads MTHRRTKLFMMAAVVSYVMTSCGA. Disulfide bonds link cysteine 70-cysteine 184 and cysteine 201-cysteine 211.

This sequence belongs to the somatotropin/prolactin family.

It is found in the secreted. The polypeptide is Prolactin (prl) (Paralichthys olivaceus (Bastard halibut)).